The following is a 42-amino-acid chain: Photosystem II reaction center protein J (42 aa).

Residues 12 to 32 (LWFVGMIVGLAALGLLGIFFY) traverse the membrane as a helical segment.

It belongs to the PsbJ family. In terms of assembly, PSII is composed of 1 copy each of membrane proteins PsbA, PsbB, PsbC, PsbD, PsbE, PsbF, PsbH, PsbI, PsbJ, PsbK, PsbL, PsbM, PsbT, PsbX, PsbY, PsbZ, Psb30/Ycf12, at least 3 peripheral proteins of the oxygen-evolving complex and a large number of cofactors. It forms dimeric complexes.

The protein localises to the plastid. Its subcellular location is the chloroplast thylakoid membrane. One of the components of the core complex of photosystem II (PSII). PSII is a light-driven water:plastoquinone oxidoreductase that uses light energy to abstract electrons from H(2)O, generating O(2) and a proton gradient subsequently used for ATP formation. It consists of a core antenna complex that captures photons, and an electron transfer chain that converts photonic excitation into a charge separation. This is Photosystem II reaction center protein J from Nephroselmis olivacea (Green alga).